Reading from the N-terminus, the 913-residue chain is Alanine--tRNA ligase (913 aa).

Zn(2+)-binding residues include histidine 600, histidine 604, cysteine 703, and histidine 707.

This sequence belongs to the class-II aminoacyl-tRNA synthetase family. The cofactor is Zn(2+).

Its subcellular location is the cytoplasm. The enzyme catalyses tRNA(Ala) + L-alanine + ATP = L-alanyl-tRNA(Ala) + AMP + diphosphate. Catalyzes the attachment of alanine to tRNA(Ala) in a two-step reaction: alanine is first activated by ATP to form Ala-AMP and then transferred to the acceptor end of tRNA(Ala). Also edits incorrectly charged Ser-tRNA(Ala) and Gly-tRNA(Ala) via its editing domain. This chain is Alanine--tRNA ligase, found in Methanothrix thermoacetophila (strain DSM 6194 / JCM 14653 / NBRC 101360 / PT) (Methanosaeta thermophila).